The following is a 163-amino-acid chain: Nucleotide-binding protein HAPS_2236 (163 aa).

The protein belongs to the YajQ family.

In terms of biological role, nucleotide-binding protein. This chain is Nucleotide-binding protein HAPS_2236, found in Glaesserella parasuis serovar 5 (strain SH0165) (Haemophilus parasuis).